We begin with the raw amino-acid sequence, 225 residues long: NAD(P)H-quinone oxidoreductase subunit K, chloroplastic (225 aa).

Cys43, Cys44, Cys108, and Cys139 together coordinate [4Fe-4S] cluster.

It belongs to the complex I 20 kDa subunit family. As to quaternary structure, NDH is composed of at least 16 different subunits, 5 of which are encoded in the nucleus. It depends on [4Fe-4S] cluster as a cofactor.

Its subcellular location is the plastid. The protein localises to the chloroplast thylakoid membrane. It carries out the reaction a plastoquinone + NADH + (n+1) H(+)(in) = a plastoquinol + NAD(+) + n H(+)(out). The enzyme catalyses a plastoquinone + NADPH + (n+1) H(+)(in) = a plastoquinol + NADP(+) + n H(+)(out). Its function is as follows. NDH shuttles electrons from NAD(P)H:plastoquinone, via FMN and iron-sulfur (Fe-S) centers, to quinones in the photosynthetic chain and possibly in a chloroplast respiratory chain. The immediate electron acceptor for the enzyme in this species is believed to be plastoquinone. Couples the redox reaction to proton translocation, and thus conserves the redox energy in a proton gradient. This is NAD(P)H-quinone oxidoreductase subunit K, chloroplastic from Hordeum vulgare (Barley).